Here is a 418-residue protein sequence, read N- to C-terminus: Oxalate:formate antiporter (418 aa).

Helical transmembrane passes span 17–37, 48–68, 84–104, 108–128, 141–161, 172–192, 222–242, 250–270, 288–308, 311–331, 350–370, and 378–398; these read WFYL…QYSW, LGVS…IQAG, IPLM…GMVD, ALYA…GIAM, LASG…LPLI, AAFM…AFVI, FWVL…LVAN, LGLA…FNGG, MSVV…IAAL, VAFI…YALF, FFWA…AAIA, and AFLI…FVIP. Residue K355 participates in oxalate binding.

Belongs to the major facilitator superfamily. OFA (TC 2.A.1.11) family. Monomer.

The protein resides in the cell inner membrane. Its function is as follows. Anion transporter that carries out the exchange of divalent oxalate with monovalent formate, the product of oxalate decarboxylation, at the plasma membrane, and in doing so catalyzes the vectorial portion of a proton-motive metabolic cycle that drives ATP synthesis. The polypeptide is Oxalate:formate antiporter (oxlT) (Oxalobacter formigenes).